Here is a 175-residue protein sequence, read N- to C-terminus: Nicotinamide-nucleotide adenylyltransferase 1 (175 aa).

It belongs to the archaeal NMN adenylyltransferase family.

The protein resides in the cytoplasm. It carries out the reaction beta-nicotinamide D-ribonucleotide + ATP + H(+) = diphosphate + NAD(+). It functions in the pathway cofactor biosynthesis; NAD(+) biosynthesis; NAD(+) from nicotinamide D-ribonucleotide: step 1/1. In Sulfolobus acidocaldarius (strain ATCC 33909 / DSM 639 / JCM 8929 / NBRC 15157 / NCIMB 11770), this protein is Nicotinamide-nucleotide adenylyltransferase 1.